The following is a 274-amino-acid chain: Eukaryotic translation initiation factor 3 subunit J (274 aa).

Disordered regions lie at residues 1 to 120 (MSGK…DLKH) and 227 to 246 (EEKAAEKGGKKSKAAKTKTS). Acidic residues predominate over residues 30-50 (DEEGNESDVLDSWDAAEDSEV). A coiled-coil region spans residues 46–112 (EDSEVEREKA…AERRERLRRE (67 aa)). 2 stretches are compositionally biased toward basic and acidic residues: residues 51–67 (EREKAKKAAEAKAKAEA) and 79–92 (RIAERQAERARQLA). Positions 93 to 102 (EDSDAEEETE) are enriched in acidic residues. Residues 103 to 120 (AERRERLRREQKESDLKH) are compositionally biased toward basic and acidic residues.

This sequence belongs to the eIF-3 subunit J family. In terms of assembly, component of the eukaryotic translation initiation factor 3 (eIF-3) complex.

Its subcellular location is the cytoplasm. In terms of biological role, component of the eukaryotic translation initiation factor 3 (eIF-3) complex, which is involved in protein synthesis of a specialized repertoire of mRNAs and, together with other initiation factors, stimulates binding of mRNA and methionyl-tRNAi to the 40S ribosome. The eIF-3 complex specifically targets and initiates translation of a subset of mRNAs involved in cell proliferation. This is Eukaryotic translation initiation factor 3 subunit J (hcr-1) from Neurospora crassa (strain ATCC 24698 / 74-OR23-1A / CBS 708.71 / DSM 1257 / FGSC 987).